A 276-amino-acid polypeptide reads, in one-letter code: NAD-capped RNA hydrolase NudC (276 aa).

Arg82 is a binding site for substrate. Zn(2+) is bound by residues Cys112 and Cys115. A substrate-binding site is contributed by Glu125. Residues Cys130 and Cys133 each contribute to the Zn(2+) site. Tyr138 is a binding site for substrate. In terms of domain architecture, Nudix hydrolase spans 139–262; the sequence is PRISPSMIVL…SIARYLIDLY (124 aa). Residues Ala172, Glu188, and Glu192 each contribute to the a divalent metal cation site. The Nudix box motif lies at 173 to 194; that stretch reads GFAEPGESAEECLVREVREEVA. Residue 206-213 coordinates substrate; the sequence is QCWPFPHS. Glu233 contacts a divalent metal cation. A substrate-binding site is contributed by Ala255.

The protein belongs to the Nudix hydrolase family. NudC subfamily. As to quaternary structure, homodimer. Mg(2+) is required as a cofactor. Mn(2+) serves as cofactor. Requires Zn(2+) as cofactor.

It catalyses the reaction a 5'-end NAD(+)-phospho-ribonucleoside in mRNA + H2O = a 5'-end phospho-adenosine-phospho-ribonucleoside in mRNA + beta-nicotinamide D-ribonucleotide + 2 H(+). The enzyme catalyses NAD(+) + H2O = beta-nicotinamide D-ribonucleotide + AMP + 2 H(+). The catalysed reaction is NADH + H2O = reduced beta-nicotinamide D-ribonucleotide + AMP + 2 H(+). Functionally, mRNA decapping enzyme that specifically removes the nicotinamide adenine dinucleotide (NAD) cap from a subset of mRNAs by hydrolyzing the diphosphate linkage to produce nicotinamide mononucleotide (NMN) and 5' monophosphate mRNA. The NAD-cap is present at the 5'-end of some mRNAs and stabilizes RNA against 5'-processing. Has preference for mRNAs with a 5'-end purine. Catalyzes the hydrolysis of a broad range of dinucleotide pyrophosphates. The chain is NAD-capped RNA hydrolase NudC from Pseudomonas entomophila (strain L48).